The primary structure comprises 228 residues: Orotidine 5'-phosphate decarboxylase (228 aa).

Residues D8, K30, 59–68, T118, R178, Q187, G207, and R208 each bind substrate; that span reads DLKLHDIPNT. Residue K61 is the Proton donor of the active site.

The protein belongs to the OMP decarboxylase family. Type 1 subfamily. In terms of assembly, homodimer.

It carries out the reaction orotidine 5'-phosphate + H(+) = UMP + CO2. The protein operates within pyrimidine metabolism; UMP biosynthesis via de novo pathway; UMP from orotate: step 2/2. Catalyzes the decarboxylation of orotidine 5'-monophosphate (OMP) to uridine 5'-monophosphate (UMP). This is Orotidine 5'-phosphate decarboxylase from Wolinella succinogenes (strain ATCC 29543 / DSM 1740 / CCUG 13145 / JCM 31913 / LMG 7466 / NCTC 11488 / FDC 602W) (Vibrio succinogenes).